The primary structure comprises 728 residues: Catalase-peroxidase 1 (728 aa).

Positions 91-218 (WHSAGTYRTA…LAAVQMGLIY (128 aa)) form a cross-link, tryptophyl-tyrosyl-methioninium (Trp-Tyr) (with M-244). His92 serves as the catalytic Proton acceptor. Positions 218–244 (YVNPEGPDGNPDPVAAARDIRDTFARM) form a cross-link, tryptophyl-tyrosyl-methioninium (Tyr-Met) (with W-91). His259 lines the heme b pocket.

The protein belongs to the peroxidase family. Peroxidase/catalase subfamily. Homodimer or homotetramer. Requires heme b as cofactor. Formation of the three residue Trp-Tyr-Met cross-link is important for the catalase, but not the peroxidase activity of the enzyme.

The catalysed reaction is H2O2 + AH2 = A + 2 H2O. It catalyses the reaction 2 H2O2 = O2 + 2 H2O. Bifunctional enzyme with both catalase and broad-spectrum peroxidase activity. The protein is Catalase-peroxidase 1 of Burkholderia ambifaria (strain MC40-6).